A 121-amino-acid chain; its full sequence is Phosphoribosyl-AMP cyclohydrolase (121 aa).

Position 76 (aspartate 76) interacts with Mg(2+). Cysteine 77 is a Zn(2+) binding site. Positions 78 and 80 each coordinate Mg(2+). Residues cysteine 93 and cysteine 100 each coordinate Zn(2+).

It belongs to the PRA-CH family. Homodimer. Requires Mg(2+) as cofactor. Zn(2+) is required as a cofactor.

The protein resides in the cytoplasm. It catalyses the reaction 1-(5-phospho-beta-D-ribosyl)-5'-AMP + H2O = 1-(5-phospho-beta-D-ribosyl)-5-[(5-phospho-beta-D-ribosylamino)methylideneamino]imidazole-4-carboxamide. Its pathway is amino-acid biosynthesis; L-histidine biosynthesis; L-histidine from 5-phospho-alpha-D-ribose 1-diphosphate: step 3/9. Its function is as follows. Catalyzes the hydrolysis of the adenine ring of phosphoribosyl-AMP. The sequence is that of Phosphoribosyl-AMP cyclohydrolase from Methanococcoides burtonii (strain DSM 6242 / NBRC 107633 / OCM 468 / ACE-M).